A 305-amino-acid chain; its full sequence is ATP-dependent Clp protease proteolytic subunit-related protein 4, chloroplastic (305 aa).

The transit peptide at Met1–Arg68 directs the protein to the chloroplast.

It belongs to the peptidase S14 family. In terms of assembly, component of the chloroplastic Clp protease core complex which consist of at least 16 proteins: CLPP4 (3 copies), CLPP5 (3 copies), CLPR4 (2 copies), ClpP1 (1 copy), CLPP6 (1 copy), CLPR2 (1 copy), CLPT1 (1 copy), CLPT2 (1 copy) and 3 copies of CLPP3 and/or CLPR1 and/or CLPR3. The core complex is organized in two heptameric rings, one containing CLPP3,4,5,6 in a 1:2:3:1 ratio and the other CLPP1 and CLPR1,2,3,4 in a 3:1:1:1:1 ratio.

The protein localises to the plastid. Its subcellular location is the chloroplast. Involved in plastid protein homeostasis. This chain is ATP-dependent Clp protease proteolytic subunit-related protein 4, chloroplastic, found in Arabidopsis thaliana (Mouse-ear cress).